The sequence spans 123 residues: Large ribosomal subunit protein eL8 (123 aa).

Belongs to the eukaryotic ribosomal protein eL8 family. As to quaternary structure, part of the 50S ribosomal subunit. Probably part of the RNase P complex.

The protein resides in the cytoplasm. Functionally, multifunctional RNA-binding protein that recognizes the K-turn motif in ribosomal RNA, the RNA component of RNase P, box H/ACA, box C/D and box C'/D' sRNAs. The sequence is that of Large ribosomal subunit protein eL8 from Pyrococcus abyssi (strain GE5 / Orsay).